Here is a 259-residue protein sequence, read N- to C-terminus: ATP synthase subunit a (259 aa).

5 consecutive transmembrane segments (helical) span residues 29–49 (TVNIDSMIFSVILGALFIWIF), 90–110 (IAPLALTVFIWVFLMNLMDLI), 134–154 (DVNITMSMALGVFALIIIYSI), 208–228 (LVFILIAGLLPWWSQWLLSVP), and 230–250 (ALFHILVITLQAFIFMVLTIV).

Belongs to the ATPase A chain family. As to quaternary structure, F-type ATPases have 2 components, CF(1) - the catalytic core - and CF(0) - the membrane proton channel. CF(1) has five subunits: alpha(3), beta(3), gamma(1), delta(1), epsilon(1). CF(0) has three main subunits: a(1), b(2) and c(9-12). The alpha and beta chains form an alternating ring which encloses part of the gamma chain. CF(1) is attached to CF(0) by a central stalk formed by the gamma and epsilon chains, while a peripheral stalk is formed by the delta and b chains.

It is found in the cell inner membrane. Key component of the proton channel; it plays a direct role in the translocation of protons across the membrane. This is ATP synthase subunit a from Aeromonas salmonicida (strain A449).